Here is a 164-residue protein sequence, read N- to C-terminus: Ion-translocating oxidoreductase complex subunit G (164 aa).

An FMN phosphoryl threonine modification is found at threonine 125.

Belongs to the RnfG family. The complex is composed of six subunits: RnfA, RnfB, RnfC, RnfD, RnfE and RnfG. Requires FMN as cofactor.

Its function is as follows. Part of a membrane-bound complex that couples electron transfer with translocation of ions across the membrane. The protein is Ion-translocating oxidoreductase complex subunit G of Buchnera aphidicola subsp. Acyrthosiphon pisum (strain APS) (Acyrthosiphon pisum symbiotic bacterium).